The sequence spans 440 residues: COP9 signalosome complex subunit 5 (440 aa).

Positions 71 to 218 constitute an MPN domain; that stretch reads VLISKLSCEK…MGAFRTIESK (148 aa). 3 residues coordinate Zn(2+): histidine 164, histidine 166, and aspartate 177. The JAMM motif motif lies at 164–177; sequence HSHPGYDCWLSNID. Over residues 319 to 341 the composition is skewed to polar residues; sequence TQRGDSTETSSFGSMFSGDNTSD. 2 disordered regions span residues 319–343 and 375–399; these read TQRG…SDVD and SSRS…CHDE.

The protein belongs to the peptidase M67A family. CSN5 subfamily. As to quaternary structure, component of a COP9 signalosome-like (CSN) complex, composed of at least RRI1/CSN5, CSN9, RRI2/CSN10, PCI8/CSN11, CSN12 and CSI1. Within this complex it probably interacts directly with CSN12. Also interacts with RPN5. A divalent metal cation serves as cofactor.

The protein localises to the cytoplasm. It localises to the nucleus. In terms of biological role, catalytic component of the COP9 signalosome (CSN) complex that acts as an regulator of the ubiquitin (Ubl) conjugation pathway by mediating the deneddylation of the cullin subunit of SCF-type E3 ubiquitin-protein ligase complexes. The CSN complex is involved in the regulation of the mating pheromone response. This is COP9 signalosome complex subunit 5 (RRI1) from Saccharomyces cerevisiae (strain ATCC 204508 / S288c) (Baker's yeast).